Reading from the N-terminus, the 358-residue chain is Phosphoserine aminotransferase (358 aa).

Arg41 contacts L-glutamate. Pyridoxal 5'-phosphate-binding positions include 75–76 (AS), Trp100, Thr148, Asp167, and Gln190. Lys191 bears the N6-(pyridoxal phosphate)lysine mark. 233 to 234 (NT) provides a ligand contact to pyridoxal 5'-phosphate.

Belongs to the class-V pyridoxal-phosphate-dependent aminotransferase family. SerC subfamily. Homodimer. It depends on pyridoxal 5'-phosphate as a cofactor.

It is found in the cytoplasm. It catalyses the reaction O-phospho-L-serine + 2-oxoglutarate = 3-phosphooxypyruvate + L-glutamate. It carries out the reaction 4-(phosphooxy)-L-threonine + 2-oxoglutarate = (R)-3-hydroxy-2-oxo-4-phosphooxybutanoate + L-glutamate. It functions in the pathway amino-acid biosynthesis; L-serine biosynthesis; L-serine from 3-phospho-D-glycerate: step 2/3. It participates in cofactor biosynthesis; pyridoxine 5'-phosphate biosynthesis; pyridoxine 5'-phosphate from D-erythrose 4-phosphate: step 3/5. Functionally, catalyzes the reversible conversion of 3-phosphohydroxypyruvate to phosphoserine and of 3-hydroxy-2-oxo-4-phosphonooxybutanoate to phosphohydroxythreonine. The chain is Phosphoserine aminotransferase from Campylobacter jejuni subsp. jejuni serotype O:23/36 (strain 81-176).